The chain runs to 311 residues: HPr kinase/phosphorylase (311 aa).

Active-site residues include His-136 and Lys-157. ATP is bound at residue 151-158; sequence GDSGIGKS. Ser-158 is a Mg(2+) binding site. Asp-175 (proton acceptor; for phosphorylation activity. Proton donor; for dephosphorylation activity) is an active-site residue. An important for the catalytic mechanism of both phosphorylation and dephosphorylation region spans residues 199-208; that stretch reads LEIRGLGIIN. Glu-200 is a binding site for Mg(2+). Arg-241 is a catalytic residue. The tract at residues 262–267 is important for the catalytic mechanism of dephosphorylation; sequence PVRPGR.

This sequence belongs to the HPrK/P family. In terms of assembly, homohexamer. The cofactor is Mg(2+).

It carries out the reaction [HPr protein]-L-serine + ATP = [HPr protein]-O-phospho-L-serine + ADP + H(+). It catalyses the reaction [HPr protein]-O-phospho-L-serine + phosphate + H(+) = [HPr protein]-L-serine + diphosphate. Its function is as follows. Catalyzes the ATP- as well as the pyrophosphate-dependent phosphorylation of a specific serine residue in HPr, a phosphocarrier protein of the phosphoenolpyruvate-dependent sugar phosphotransferase system (PTS). HprK/P also catalyzes the pyrophosphate-producing, inorganic phosphate-dependent dephosphorylation (phosphorolysis) of seryl-phosphorylated HPr (P-Ser-HPr). The two antagonistic activities of HprK/P are regulated by several intracellular metabolites, which change their concentration in response to the absence or presence of rapidly metabolisable carbon sources (glucose, fructose, etc.) in the growth medium. Therefore, by controlling the phosphorylation state of HPr, HPrK/P is a sensor enzyme that plays a major role in the regulation of carbon metabolism and sugar transport: it mediates carbon catabolite repression (CCR), and regulates PTS-catalyzed carbohydrate uptake and inducer exclusion. The sequence is that of HPr kinase/phosphorylase from Staphylococcus haemolyticus (strain JCSC1435).